The following is a 320-amino-acid chain: Mitochondrial glycine transporter (320 aa).

Solcar repeat units follow at residues 8–92 (SKTT…LRQG), 121–205 (LSNW…LKRR), and 223–307 (SSSS…LILR). Helical transmembrane passes span 14–39 (FAAG…TRVQ), 67–93 (GTLP…RQGL), 127–152 (LATG…VRYE), 180–203 (GFGA…EQLK), 227–253 (INFV…KTRL), and 282–300 (GLGL…AWTV).

This sequence belongs to the mitochondrial carrier (TC 2.A.29) family. SLC25A38 subfamily.

It is found in the mitochondrion inner membrane. The catalysed reaction is glycine(in) = glycine(out). Functionally, mitochondrial glycine transporter that imports glycine into the mitochondrial matrix. Plays an important role in providing glycine for the first enzymatic step in heme biosynthesis, the condensation of glycine with succinyl-CoA to produce 5-aminolevulinate (ALA) in the mitochondrial matrix. The sequence is that of Mitochondrial glycine transporter from Aspergillus fumigatus (strain CBS 144.89 / FGSC A1163 / CEA10) (Neosartorya fumigata).